Here is a 125-residue protein sequence, read N- to C-terminus: Larval cuticle protein LCP-14 (125 aa).

Positions 1–16 (MKSFIVALCVVGCVLA) are cleaved as a signal peptide. Positions 33 to 102 (EGSYNYAFES…PQADFLPTPP (70 aa)) constitute a Chitin-binding type R&amp;R domain.

Functionally, component of the cuticle of the larva of tobacco hornworm. In Manduca sexta (Tobacco hawkmoth), this protein is Larval cuticle protein LCP-14 (LCP-14).